Reading from the N-terminus, the 515-residue chain is Putative ammonium transporter 2 (515 aa).

A run of 12 helical transmembrane segments spans residues 34–54, 72–92, 124–144, 156–176, 191–211, 226–246, 266–286, 291–311, 321–337, 346–366, 381–401, and 404–424; these read GVWM…FGLL, VFDV…LTFG, GISY…STIV, SHCF…HWVW, AGCS…TLYL, VSDP…WLAF, AVGT…ITRL, IQMD…TGGC, LVGA…YPVT, VGVF…PAIF, FQTS…LLFL, and FVIL…LFLI.

It belongs to the ammonia transporter channel (TC 1.A.11.2) family.

Its subcellular location is the membrane. Functionally, involved in the uptake of ammonia. Implicated in aging. This chain is Putative ammonium transporter 2 (amt-2), found in Caenorhabditis elegans.